The sequence spans 431 residues: Histidinol dehydrogenase (431 aa).

Residues Tyr-124, Gln-187, and Asn-210 each contribute to the NAD(+) site. Substrate-binding residues include Ser-236, Gln-258, and His-261. 2 residues coordinate Zn(2+): Gln-258 and His-261. Catalysis depends on proton acceptor residues Glu-325 and His-326. Positions 326, 359, 413, and 418 each coordinate substrate. Asp-359 contributes to the Zn(2+) binding site. His-418 provides a ligand contact to Zn(2+).

The protein belongs to the histidinol dehydrogenase family. Requires Zn(2+) as cofactor.

It carries out the reaction L-histidinol + 2 NAD(+) + H2O = L-histidine + 2 NADH + 3 H(+). The protein operates within amino-acid biosynthesis; L-histidine biosynthesis; L-histidine from 5-phospho-alpha-D-ribose 1-diphosphate: step 9/9. Its function is as follows. Catalyzes the sequential NAD-dependent oxidations of L-histidinol to L-histidinaldehyde and then to L-histidine. This Legionella pneumophila (strain Paris) protein is Histidinol dehydrogenase.